The chain runs to 445 residues: N-succinylarginine dihydrolase (445 aa).

Residues 19-28 (AGLSFGNVAS), Asn-110, and 137-138 (HR) each bind substrate. Residue Glu-174 is part of the active site. Arg-214 contacts substrate. Residue His-250 is part of the active site. Residues Asp-252 and Asn-363 each contribute to the substrate site. Cys-369 acts as the Nucleophile in catalysis.

It belongs to the succinylarginine dihydrolase family. As to quaternary structure, homodimer.

It catalyses the reaction N(2)-succinyl-L-arginine + 2 H2O + 2 H(+) = N(2)-succinyl-L-ornithine + 2 NH4(+) + CO2. The protein operates within amino-acid degradation; L-arginine degradation via AST pathway; L-glutamate and succinate from L-arginine: step 2/5. Catalyzes the hydrolysis of N(2)-succinylarginine into N(2)-succinylornithine, ammonia and CO(2). The sequence is that of N-succinylarginine dihydrolase from Shewanella halifaxensis (strain HAW-EB4).